A 285-amino-acid chain; its full sequence is tRNA (adenine(58)-N(1))-methyltransferase catalytic subunit TRMT61A (285 aa).

Residue Ser2 is modified to N-acetylserine. Substrate regions lie at residues 20-22, 35-42, 64-65, 85-89, and 110-117; these read LGH, QTQTRHGV, GW, QILYS, and SGTGSGSV. Residues Leu87, 114–116, Glu135, Arg140, 163–164, and Asp181 each bind S-adenosyl-L-methionine; these read SGS and DV. Substrate regions lie at residues 180–183 and 205–212; these read LDIP and SFSPCIEQ. Thr274 contributes to the substrate binding site.

Belongs to the class I-like SAM-binding methyltransferase superfamily. TRM61 family. Heterotetramer; composed of two copies of TRMT6 and two copies of TRMT61A.

Its subcellular location is the nucleus. It catalyses the reaction adenosine(58) in tRNA + S-adenosyl-L-methionine = N(1)-methyladenosine(58) in tRNA + S-adenosyl-L-homocysteine + H(+). It carries out the reaction an adenosine in mRNA + S-adenosyl-L-methionine = an N(1)-methyladenosine in mRNA + S-adenosyl-L-homocysteine + H(+). Functionally, catalytic subunit of tRNA (adenine-N(1)-)-methyltransferase, which catalyzes the formation of N(1)-methyladenine at position 58 (m1A58) in initiator methionyl-tRNA. Catalytic subunit of mRNA N(1)-methyltransferase complex, which mediates methylation of adenosine residues at the N(1) position of a small subset of mRNAs: N(1) methylation takes place in tRNA T-loop-like structures of mRNAs and is only present at low stoichiometries. This chain is tRNA (adenine(58)-N(1))-methyltransferase catalytic subunit TRMT61A (TRMT61A), found in Bos taurus (Bovine).